Here is a 52-residue protein sequence, read N- to C-terminus: uncharacterized protein (52 aa).

Positions 24 to 52 (LRENPSKNVRTIPDAGDENSSFGHARVIA) are disordered.

This is an uncharacterized protein from Treponema pallidum (strain Nichols).